A 294-amino-acid chain; its full sequence is NAD kinase (294 aa).

Asp74 functions as the Proton acceptor in the catalytic mechanism. Residues 74–75, Arg79, 149–150, Asp179, 190–195, and Ala214 each bind NAD(+); these read DG, NE, and TGYSLS.

The protein belongs to the NAD kinase family. A divalent metal cation serves as cofactor.

It is found in the cytoplasm. It catalyses the reaction NAD(+) + ATP = ADP + NADP(+) + H(+). Functionally, involved in the regulation of the intracellular balance of NAD and NADP, and is a key enzyme in the biosynthesis of NADP. Catalyzes specifically the phosphorylation on 2'-hydroxyl of the adenosine moiety of NAD to yield NADP. This chain is NAD kinase, found in Flavobacterium johnsoniae (strain ATCC 17061 / DSM 2064 / JCM 8514 / BCRC 14874 / CCUG 350202 / NBRC 14942 / NCIMB 11054 / UW101) (Cytophaga johnsonae).